Here is a 513-residue protein sequence, read N- to C-terminus: Glucose-6-phosphate 1-dehydrogenase 2 (513 aa).

Alanine 2 bears the N-acetylalanine mark. At serine 8 the chain carries Phosphoserine. Position 10 is a phosphothreonine (threonine 10). NADP(+)-binding positions include glycine 38 to lysine 45 and arginine 72. Position 89 is an N6-acetyllysine (lysine 89). Positions 147 and 171 each coordinate NADP(+). Residues lysine 171, histidine 201 to lysine 205, glutamate 239, and aspartate 258 contribute to the D-glucose 6-phosphate site. Lysine 171 is subject to N6-(2-hydroxyisobutyryl)lysine; alternate. At lysine 171 the chain carries N6-acetyllysine; alternate. The active-site Proton acceptor is histidine 263. Residue arginine 357 coordinates NADP(+). Positions 360 and 365 each coordinate D-glucose 6-phosphate. Lysine 366, arginine 370, and arginine 393 together coordinate NADP(+). Glutamine 395 provides a ligand contact to D-glucose 6-phosphate. Aspartate 421–threonine 423 serves as a coordination point for NADP(+). Lysine 432 is subject to N6-acetyllysine. Positions 487 and 503 each coordinate NADP(+). Phosphotyrosine is present on tyrosine 503.

Belongs to the glucose-6-phosphate dehydrogenase family. Homotetramer; dimer of dimers. Interacts with SIRT2; the interaction is enhanced by H(2)O(2) treatment. Acetylated by ELP3; acetylation inhibits its homodimerization and enzyme activity. Deacetylated by SIRT2; deacetylation stimulates its enzyme activity. In terms of tissue distribution, testis.

It is found in the cytoplasm. It localises to the cytosol. Its subcellular location is the membrane. The catalysed reaction is D-glucose 6-phosphate + NADP(+) = 6-phospho-D-glucono-1,5-lactone + NADPH + H(+). The protein operates within carbohydrate degradation; pentose phosphate pathway; D-ribulose 5-phosphate from D-glucose 6-phosphate (oxidative stage): step 1/3. Catalyzes the rate-limiting step of the oxidative pentose-phosphate pathway, which represents a route for the dissimilation of carbohydrates besides glycolysis. The main function of this enzyme is to provide reducing power (NADPH) and pentose phosphates for fatty acid and nucleic acid synthesis. This chain is Glucose-6-phosphate 1-dehydrogenase 2 (G6pd2), found in Mus musculus (Mouse).